The following is a 170-amino-acid chain: Photosystem II extrinsic protein V (170 aa).

Residues 1-33 (MASLFASLGRSLIKLLIVLPVIIGLSISSPAMA) form the signal peptide. Heme c is bound by residues Cys-70, Cys-73, His-74, and His-125.

This sequence belongs to the cytochrome c family. PsbV subfamily. PSII is composed of 1 copy each of membrane proteins PsbA, PsbB, PsbC, PsbD, PsbE, PsbF, PsbH, PsbI, PsbJ, PsbK, PsbL, PsbM, PsbT, PsbX, PsbY, Psb30/Ycf12, peripheral proteins PsbO, CyanoQ (PsbQ), PsbU, PsbV and a large number of cofactors. It forms dimeric complexes. It depends on heme c as a cofactor.

It is found in the cellular thylakoid membrane. Its function is as follows. One of the extrinsic, lumenal subunits of photosystem II (PSII). PSII is a light-driven water plastoquinone oxidoreductase, using light energy to abstract electrons from H(2)O, generating a proton gradient subsequently used for ATP formation. The extrinsic proteins stabilize the structure of photosystem II oxygen-evolving complex (OEC), the ion environment of oxygen evolution and protect the OEC against heat-induced inactivation. Low-potential cytochrome c that plays a role in the OEC of PSII. This chain is Photosystem II extrinsic protein V, found in Prochlorococcus marinus (strain MIT 9313).